The primary structure comprises 309 residues: Beta-lactamase (309 aa).

The first 28 residues, 1-28, serve as a signal peptide directing secretion; it reads MMILKNKRMLKIGICVGILGLSITSLEA. Ser92 acts as the Acyl-ester intermediate in catalysis. Catalysis depends on Glu188, which acts as the Proton acceptor. 254 to 256 is a substrate binding site; the sequence is KSG.

This sequence belongs to the class-A beta-lactamase family.

It carries out the reaction a beta-lactam + H2O = a substituted beta-amino acid. This protein is a beta-lactamase with a substrate specificity for penicillins. The sequence is that of Beta-lactamase (bla) from Bacillus thuringiensis.